Reading from the N-terminus, the 187-residue chain is Accessory gene regulator protein B (187 aa).

Helical transmembrane passes span 49 to 69, 82 to 102, 106 to 126, 144 to 164, and 166 to 186; these read ISIFLSVFLYTLVTHLSYMLI, ILCYIQSILIFVFVPYFLINI, FTYLLALSIIGLISVVIYAPA, VSIIMYLLVMILSLIIHPFYA, and FMLLGILVESITLLPIFFPKE.

Belongs to the AgrB family.

Its subcellular location is the cell membrane. Essential for the production of a quorum sensing system signal molecule, the autoinducing peptide (AIP). This quorum sensing system is responsible for the regulation of the expression of virulence factor genes. Involved in the proteolytic processing of AgrD, the precursor of AIP. The chain is Accessory gene regulator protein B from Staphylococcus aureus (strain bovine RF122 / ET3-1).